The sequence spans 275 residues: Maltoporin (275 aa).

Belongs to the porin LamB (TC 1.B.3) family. As to quaternary structure, homotrimer formed of three 18-stranded antiparallel beta-barrels, containing three independent channels.

The protein localises to the cell outer membrane. It catalyses the reaction beta-maltose(in) = beta-maltose(out). Functionally, involved in the transport of maltose and maltodextrins. This is Maltoporin (lamB) from Vibrio parahaemolyticus.